We begin with the raw amino-acid sequence, 577 residues long: MNIQALLSEKVSQAMIAAGAPADCEPQVRQSAKVQFGDYQANGMMAVAKKLGMAPRQLAEQVLTHLDLSGIASKVEIAGPGFINIFLEPAFLAEQVQQALTSDRLGVSQPTRQTIVVDYSAPNVAKEMHVGHLRSTIIGDAAVRTLEFLGHHVIRANHVGDWGTQFGMLIAWLEKQQQENAGDMALADLEGFYRDAKKHYDEDETFAERARNYVVKLQSGDTYFREMWRKLVDITMTQNQITYDRLNVTLTRDDVMGESLYNPMLPGIVADLKAKGLAVESEGATVVFLDEFKNKEGDPMGVIIQKKDGGYLYTTTDIACAKYRYETLHADRVLYYIDSRQHQHLMQAWTIVRKAGYVPDSVPLEHHMFGMMLGKDGKPFKTRTGGTVKLADLLDEALERARRLVAEKNPDMPADELEKLANAVGIGAVKYADLSKNRTTDYIFDWDNMLAFEGNTAPYMQYAYTRVLSVFRKADIDEQALASAPVIISEDREAQLAARLLQFEETLTVVAREGTPHVMCAYLYDVAGLFSGFYEHCPILSAENDAVRNSRLKLAQLTAKTLKLGLDTLGIETVERM.

Positions 124-132 match the 'HIGH' region motif; it reads VAKEMHVGH.

It belongs to the class-I aminoacyl-tRNA synthetase family. As to quaternary structure, monomer.

The protein localises to the cytoplasm. It carries out the reaction tRNA(Arg) + L-arginine + ATP = L-arginyl-tRNA(Arg) + AMP + diphosphate. The sequence is that of Arginine--tRNA ligase from Salmonella typhi.